The chain runs to 119 residues: Probable non-functional T cell receptor gamma variable 11 (119 aa).

A signal peptide spans 1–18 (MPLVVAVIFFSLWVFALG). The region spanning 23 to 119 (PEISISRPAN…VYHCACWIRH (97 aa)) is the Ig-like domain. An N-linked (GlcNAc...) asparagine glycan is attached at N32.

In terms of assembly, most probably, the gamma-delta TR is not assembled due to incorrect folding of the gamma chain. Gamma-delta TR is a heterodimer composed of a gamma and delta chain; disulfide-linked. The gamma-delta TR is associated with the transmembrane signaling CD3 coreceptor proteins following the stoichiometry: a single gamma-delta TR heterodimer associates with one CD3D-CD3E heterodimer, one CD3G-CD3E heterodimer and one CD247 homodimer forming a stable octameric structure. Upon activation, gamma-delta TR complex associates with FCER1G to initiate intracellular signaling.

Its subcellular location is the cell membrane. Its function is as follows. Probable non-functional open reading frame (ORF) of V region of the variable domain of T cell receptor (TR) gamma chain. Non-functional ORF generally cannot participate in the synthesis of a productive T cell receptor (TR) chain due to altered V-(D)-J or switch recombination and/or splicing site (at mRNA level) and/or conserved amino acid change (protein level). Gamma-delta TRs recognize a variety of self and foreign non-peptide antigens frequently expressed at the epithelial boundaries between the host and external environment, including endogenous lipids presented by MH-like protein CD1D and phosphoantigens presented by butyrophilin-like molecule BTN3A1. Upon antigen recognition induces rapid, innate-like immune responses involved in pathogen clearance and tissue repair. Binding of gamma-delta TR complex to antigen triggers phosphorylation of immunoreceptor tyrosine-based activation motifs (ITAMs) in the CD3 chains by the LCK and FYN kinases, allowing the recruitment, phosphorylation, and activation of ZAP70 that facilitates phosphorylation of the scaffolding proteins LCP2 and LAT. This lead to the formation of a supramolecular signalosome that recruits the phospholipase PLCG1, resulting in calcium mobilization and ERK activation, ultimately leading to T cell expansion and differentiation into effector cells. Gamma-delta TRs are produced through somatic rearrangement of a limited repertoire of variable (V), diversity (D), and joining (J) genes. The potential diversity of gamma-delta TRs is conferred by the unique ability to rearrange (D) genes in tandem and to utilize all three reading frames. The combinatorial diversity is considerably increased by the sequence exonuclease trimming and random nucleotide (N) region additions which occur during the V-(D)-J rearrangements. This Homo sapiens (Human) protein is Probable non-functional T cell receptor gamma variable 11.